A 79-amino-acid chain; its full sequence is Putative defensin-like protein 137 (79 aa).

The N-terminal stretch at 1–24 (MKKYFQPSFVILIIFTVLVLGVVG) is a signal peptide. 4 disulfide bridges follow: Cys33-Cys78, Cys42-Cys62, Cys47-Cys72, and Cys51-Cys74.

This sequence belongs to the DEFL family.

It localises to the secreted. The protein is Putative defensin-like protein 137 (LCR14) of Arabidopsis thaliana (Mouse-ear cress).